Consider the following 481-residue polypeptide: Zinc metalloproteinase/disintegrin (481 aa).

The signal sequence occupies residues 1-20 (MIQVLLVTICLAVFPYQGSS). A propeptide spanning residues 21 to 190 (IILESGNVDD…KASQLYLTPE (170 aa)) is cleaved from the precursor. The region spanning 197–392 (RYIKLAIVVD…DNPQCILNAP (196 aa)) is the Peptidase M12B domain. Cystine bridges form between C308-C387, C349-C371, and C351-C354. H333 lines the Zn(2+) pocket. E334 is a catalytic residue. Residues H337 and H343 each contribute to the Zn(2+) site. Residues 393-408 (LRTDTVSTPVSGNEFL) constitute a propeptide that is removed on maturation. The Disintegrin domain occupies 400–481 (TPVSGNEFLE…GDCPRNPFHA (82 aa)). Disulfide bonds link C414–C429, C416–C424, C423–C446, C437–C443, C442–C467, and C455–C474. The Cell attachment site signature appears at 459-461 (RGD).

The protein belongs to the venom metalloproteinase (M12B) family. P-II subfamily. P-IIa sub-subfamily. In terms of assembly, monomer. The cofactor is Zn(2+). In terms of tissue distribution, expressed by the venom gland.

It is found in the secreted. Impairs hemostasis in the envenomed animal. Its function is as follows. Disintegrin elegantin-2a-f: inhibits platelet aggregation induced by ADP, thrombin, platelet-activating factor and collagen. Acts by inhibiting fibrinogen interaction with platelet receptors GPIIb/GPIIIa (ITGA2B/ITGB3). The sequence is that of Zinc metalloproteinase/disintegrin from Protobothrops elegans (Elegant pitviper).